Consider the following 354-residue polypeptide: tRNA-specific 2-thiouridylase MnmA (354 aa).

ATP-binding positions include 7–14 (AMSGGVDS) and Met-33. Residue Cys-94 is the Nucleophile of the active site. An intrachain disulfide couples Cys-94 to Cys-192. ATP is bound at residue Gly-118. The segment at 141–143 (KDQ) is interaction with tRNA. Cys-192 (cysteine persulfide intermediate) is an active-site residue. The interaction with tRNA stretch occupies residues 296 to 297 (RY).

Belongs to the MnmA/TRMU family.

The protein resides in the cytoplasm. The catalysed reaction is S-sulfanyl-L-cysteinyl-[protein] + uridine(34) in tRNA + AH2 + ATP = 2-thiouridine(34) in tRNA + L-cysteinyl-[protein] + A + AMP + diphosphate + H(+). Functionally, catalyzes the 2-thiolation of uridine at the wobble position (U34) of tRNA, leading to the formation of s(2)U34. This is tRNA-specific 2-thiouridylase MnmA from Trichlorobacter lovleyi (strain ATCC BAA-1151 / DSM 17278 / SZ) (Geobacter lovleyi).